Consider the following 505-residue polypeptide: MLYFRYGFLVVWCAAGVSAAYGADAPAILDDKALLQVQRSVSDKWAESDWKVENDAPRVVDGDFLLAHPKMLEHSLRDALNGNQADLIASLADLYAKLPDYDAVLYGRARALLAKLAGRPAEAVARYRELHGENAADERILLDLAAAEFDDFRLKSAERHFAEAAKLDLPAPVLENVGRFRKKTEGLTGWRFSGGISPAVNRNANNAAPQYCRQNGGRQICSVSRAERAAGLNYEIEAEKLTPLADNHYLLFRSNIGGTSYYFSKKSAYDDGFGRAYLGWQYKNARQTAGILPFYQVQLSGSDGFDAKTKRVNNRRLPPYMLAHGVGVQLSHTYRPNPGWQFSVALEHYRQRYREQDRAEYNNGRQDGFYVSSAKRLGESATVFGGWQFVRFVPKRETVGGAVNNAAYRRNGVYAGWAQEWRQLGGLNSRVSASYARRNYKGIAAFSTEAQRNREWNVSLALSHDKLSYKGIVPALNYRFGRTESNVPYAKRRNSEVFVSADWRF.

Residues 1–19 (MLYFRYGFLVVWCAAGVSA) form the signal peptide. The interval 23–188 (ADAPAILDDK…RFRKKTEGLT (166 aa)) is N-terminal domain. The interval 189–505 (GWRFSGGISP…EVFVSADWRF (317 aa)) is C-terminal probable beta barrel. The next 14 beta stranded transmembrane spans lie at 190 to 200 (WRFSGGISPAV), 232 to 243 (LNYEIEAEKLTP), 248 to 258 (HYLLFRSNIGG), 273 to 283 (FGRAYLGWQYK), 287 to 297 (QTAGILPFYQV), 326 to 335 (VGVQLSHTYR), 340 to 350 (WQFSVALEHYR), 368 to 377 (GFYVSSAKRL), 381 to 391 (ATVFGGWQFVR), 411 to 420 (NGVYAGWAQE), 427 to 437 (LNSRVSASYAR), 456 to 465 (WNVSLALSHD), 472 to 482 (IVPALNYRFGR), and 495 to 505 (SEVFVSADWRF).

This sequence belongs to the Slam family.

The protein resides in the cell outer membrane. In terms of biological role, required for correct export to the cell surface of cell outer membrane lipoprotein HpuA heterologously in E.coli (hpuA does not exist in N.meningitidis strain MC58). The polypeptide is Surface lipoprotein assembly modifier 2 (Neisseria meningitidis serogroup B (strain ATCC BAA-335 / MC58)).